A 471-amino-acid chain; its full sequence is Trigger factor (471 aa).

The PPIase FKBP-type domain maps to 169–264 (GDVAVVDFKG…LKEIKEKELP (96 aa)). Residues 443–471 (SLASQESEITAPETEAETIEVTAESTTGE) form a disordered region. Positions 448–471 (ESEITAPETEAETIEVTAESTTGE) are enriched in low complexity.

It belongs to the FKBP-type PPIase family. Tig subfamily.

It localises to the cytoplasm. It catalyses the reaction [protein]-peptidylproline (omega=180) = [protein]-peptidylproline (omega=0). Its function is as follows. Involved in protein export. Acts as a chaperone by maintaining the newly synthesized protein in an open conformation. Functions as a peptidyl-prolyl cis-trans isomerase. This Trichormus variabilis (strain ATCC 29413 / PCC 7937) (Anabaena variabilis) protein is Trigger factor.